A 265-amino-acid chain; its full sequence is Phosphatidylglycerol--prolipoprotein diacylglyceryl transferase (265 aa).

Helical transmembrane passes span 17–37 (LAIR…IWLA), 59–79 (MLFY…VLFY), 94–114 (VWKG…AMSI), 123–143 (VLDV…FGRL), 177–197 (SPLY…WLFA), 204–224 (MAVG…TEYF), and 238–258 (ISAG…MLLI). Residue Arg142 coordinates a 1,2-diacyl-sn-glycero-3-phospho-(1'-sn-glycerol).

The protein belongs to the Lgt family.

The protein resides in the cell inner membrane. The catalysed reaction is L-cysteinyl-[prolipoprotein] + a 1,2-diacyl-sn-glycero-3-phospho-(1'-sn-glycerol) = an S-1,2-diacyl-sn-glyceryl-L-cysteinyl-[prolipoprotein] + sn-glycerol 1-phosphate + H(+). It participates in protein modification; lipoprotein biosynthesis (diacylglyceryl transfer). Functionally, catalyzes the transfer of the diacylglyceryl group from phosphatidylglycerol to the sulfhydryl group of the N-terminal cysteine of a prolipoprotein, the first step in the formation of mature lipoproteins. This chain is Phosphatidylglycerol--prolipoprotein diacylglyceryl transferase, found in Janthinobacterium sp. (strain Marseille) (Minibacterium massiliensis).